Here is a 260-residue protein sequence, read N- to C-terminus: Pyridoxine 5'-phosphate synthase (260 aa).

3-amino-2-oxopropyl phosphate is bound by residues asparagine 10 and arginine 21. The active-site Proton acceptor is histidine 46. The 1-deoxy-D-xylulose 5-phosphate site is built by arginine 48 and histidine 53. The Proton acceptor role is filled by glutamate 76. Threonine 113 contacts 1-deoxy-D-xylulose 5-phosphate. Histidine 204 serves as the catalytic Proton donor. Residues aspartate 205 and 227 to 228 (GH) contribute to the 3-amino-2-oxopropyl phosphate site.

The protein belongs to the PNP synthase family. As to quaternary structure, homooctamer; tetramer of dimers.

Its subcellular location is the cytoplasm. The enzyme catalyses 3-amino-2-oxopropyl phosphate + 1-deoxy-D-xylulose 5-phosphate = pyridoxine 5'-phosphate + phosphate + 2 H2O + H(+). It functions in the pathway cofactor biosynthesis; pyridoxine 5'-phosphate biosynthesis; pyridoxine 5'-phosphate from D-erythrose 4-phosphate: step 5/5. In terms of biological role, catalyzes the complicated ring closure reaction between the two acyclic compounds 1-deoxy-D-xylulose-5-phosphate (DXP) and 3-amino-2-oxopropyl phosphate (1-amino-acetone-3-phosphate or AAP) to form pyridoxine 5'-phosphate (PNP) and inorganic phosphate. This chain is Pyridoxine 5'-phosphate synthase, found in Xylella fastidiosa (strain M23).